Consider the following 1173-residue polypeptide: Paired amphipathic helix protein Sin3-like 6 (1173 aa).

Residues 40 to 75 form a disordered region; the sequence is NQSAGESGRRLKMKRAREDVHTDTQKRKPEVSSRGE. Positions 55–75 are enriched in basic and acidic residues; that stretch reads AREDVHTDTQKRKPEVSSRGE. 2 PAH domains span residues 79 to 148 and 162 to 232; these read LPRT…LPKG and IRVD…LPNC. 3 disordered regions span residues 236-337, 655-697, and 740-813; these read APST…TTKY, TASG…TAQP, and KHEL…ENNK. Basic and acidic residues-rich tracts occupy residues 264–276 and 301–319; these read CKLEDYSGHSDQR and RDYENREDTETDTADRTEK. The segment covering 320–337 has biased composition (polar residues); it reads SAASGSQDIGNHKSTTKY. The segment covering 750–765 has biased composition (polar residues); the sequence is PTASREQSNFEVNGQN. Residues 778 to 810 show a composition bias toward basic and acidic residues; the sequence is RSNKDKQSCDKKGAKNKTRAEDDKQENCHKLSE.

It localises to the nucleus. Acts as a transcriptional repressor. Plays roles in regulating gene expression and genome stability. This is Paired amphipathic helix protein Sin3-like 6 (SNL6) from Arabidopsis thaliana (Mouse-ear cress).